A 127-amino-acid polypeptide reads, in one-letter code: Large ribosomal subunit protein bL20 (127 aa).

Belongs to the bacterial ribosomal protein bL20 family.

Binds directly to 23S ribosomal RNA and is necessary for the in vitro assembly process of the 50S ribosomal subunit. It is not involved in the protein synthesizing functions of that subunit. The protein is Large ribosomal subunit protein bL20 (rplT) of Streptomyces coelicolor (strain ATCC BAA-471 / A3(2) / M145).